Reading from the N-terminus, the 337-residue chain is Cytoskeleton protein RodZ (337 aa).

The Cytoplasmic segment spans residues 1-111; it reads MNTEATHDQN…LGKRRKKRDG (111 aa). The HTH cro/C1-type domain occupies 19–71; it reads LRNAREQLGLSQQAVAERLCLKVSTVRDIEEDKAPADLASTFLRGYIRSYARL. A DNA-binding region (H-T-H motif) is located at residues 30 to 49; the sequence is QQAVAERLCLKVSTVRDIEE. The helical; Signal-anchor for type II membrane protein transmembrane segment at 112–132 threads the bilayer; it reads WLMTFTWLVLFVVIGLSGAWW. At 133 to 337 the chain is on the periplasmic side; it reads WQDHKAQQEE…TLNAEQSPAQ (205 aa). The span at 145 to 167 shows a compositional bias: polar residues; that stretch reads TMADQSSAELSSNSEQGQSVPLN. Residues 145–218 are disordered; that stretch reads TMADQSSAEL…AVVSPSQANV (74 aa). Over residues 168 to 207 the composition is skewed to low complexity; sequence TSTTTDPATTSTPPASVDTTATNTQTPAVTAPAPAVDPQQ. Residues 208 to 218 show a composition bias toward polar residues; sequence NAVVSPSQANV.

The protein belongs to the RodZ family.

The protein resides in the cell inner membrane. Its function is as follows. Cytoskeletal protein that is involved in cell-shape control through regulation of the length of the long axis. This Shigella dysenteriae serotype 1 (strain Sd197) protein is Cytoskeleton protein RodZ.